The sequence spans 91 residues: Alpha-defensin-related sequence 2 (91 aa).

The signal sequence occupies residues 1–19; the sequence is MKKLVLLFALVLLAFQVQA. A propeptide spanning residues 20–58 is cleaved from the precursor; it reads DSIQNTDEETKTEEQPGEKDQAVSVSFGDPQGSALQDAA. Residues 22–48 form a disordered region; that stretch reads IQNTDEETKTEEQPGEKDQAVSVSFGD. Residues 27–40 show a composition bias toward basic and acidic residues; sequence EETKTEEQPGEKDQ. 7 tandem repeats follow at residues 65–67, 68–70, 71–73, 74–76, 77–79, 80–82, and 83–85. Residues 65–85 are 7 X 3 AA tandem repeats of C-P-X; it reads CPQCPRCPSCPSCPRCPRCPR.

It belongs to the alpha-defensin family. In terms of tissue distribution, small bowel, spleen, colon, kidney, liver, stomach and femur marrow.

It is found in the secreted. Its function is as follows. Apparent precursor of a secreted, cationic, proline- and cysteine-rich peptide that contains Cys-Pro-Xaa repeats. Unlike cryptdin, the proposed mature peptide region lacks the structural motif characteristic of defensins. It may have microbicidal activities. The sequence is that of Alpha-defensin-related sequence 2 (Defa-rs2) from Mus musculus (Mouse).